The chain runs to 132 residues: Small ribosomal subunit protein uS8 (132 aa).

This sequence belongs to the universal ribosomal protein uS8 family. In terms of assembly, part of the 30S ribosomal subunit. Contacts proteins S5 and S12.

One of the primary rRNA binding proteins, it binds directly to 16S rRNA central domain where it helps coordinate assembly of the platform of the 30S subunit. This chain is Small ribosomal subunit protein uS8, found in Ehrlichia ruminantium (strain Welgevonden).